Consider the following 418-residue polypeptide: Probable serine hydroxymethyltransferase (418 aa).

Residues L118 and 122–124 (GHL) contribute to the (6S)-5,6,7,8-tetrahydrofolate site. At K226 the chain carries N6-(pyridoxal phosphate)lysine. Position 351 to 353 (351 to 353 (SPF)) interacts with (6S)-5,6,7,8-tetrahydrofolate.

This sequence belongs to the SHMT family. Homodimer. It depends on pyridoxal 5'-phosphate as a cofactor.

The protein resides in the cytoplasm. It carries out the reaction (6R)-5,10-methylene-5,6,7,8-tetrahydrofolate + glycine + H2O = (6S)-5,6,7,8-tetrahydrofolate + L-serine. The protein operates within one-carbon metabolism; tetrahydrofolate interconversion. Functionally, catalyzes the reversible interconversion of serine and glycine with tetrahydrofolate (THF) serving as the one-carbon carrier. This reaction serves as the major source of one-carbon groups required for the biosynthesis of purines, thymidylate, methionine, and other important biomolecules. This chain is Probable serine hydroxymethyltransferase, found in Mesomycoplasma hyopneumoniae (strain 232) (Mycoplasma hyopneumoniae).